The chain runs to 500 residues: Protein O-glucosyltransferase 2 (500 aa).

Positions 1 to 22 (MLRKLLLLLMSCIIFLTRRSKA) are cleaved as a signal peptide. One copy of the Filamin repeat lies at 23-128 (AAAASASKTL…LVGKSPYVLR (106 aa)). Residues Asn60 and Asn259 are each glycosylated (N-linked (GlcNAc...) asparagine). The Prevents secretion from ER motif lies at 497 to 500 (RDEL).

This sequence belongs to the KDELC family.

The protein localises to the endoplasmic reticulum lumen. The enzyme catalyses L-seryl-[EGF-like domain protein] + UDP-alpha-D-glucose = 3-O-(beta-D-glucosyl)-L-seryl-[EGF-like domain protein] + UDP + H(+). It carries out the reaction L-seryl-[EGF-like domain protein] + UDP-alpha-D-xylose = 3-O-(beta-D-xylosyl)-L-seryl-[EGF-like domain protein] + UDP + H(+). Its pathway is protein modification; protein glycosylation. Functionally, protein glucosyltransferase that catalyzes the transfer of glucose from UDP-glucose to a serine residue within the consensus sequence peptide C-X-N-T-X-G-S-F-X-C. Can also catalyze the transfer of xylose from UDP-xylose but less efficiently. The protein is Protein O-glucosyltransferase 2 (poglut2) of Danio rerio (Zebrafish).